The following is a 159-amino-acid chain: Ribosomal RNA large subunit methyltransferase H (159 aa).

S-adenosyl-L-methionine is bound by residues L76 and G108.

It belongs to the RNA methyltransferase RlmH family. Homodimer.

The protein localises to the cytoplasm. It carries out the reaction pseudouridine(1915) in 23S rRNA + S-adenosyl-L-methionine = N(3)-methylpseudouridine(1915) in 23S rRNA + S-adenosyl-L-homocysteine + H(+). Its function is as follows. Specifically methylates the pseudouridine at position 1915 (m3Psi1915) in 23S rRNA. This is Ribosomal RNA large subunit methyltransferase H from Natranaerobius thermophilus (strain ATCC BAA-1301 / DSM 18059 / JW/NM-WN-LF).